Reading from the N-terminus, the 346-residue chain is Dihydroorotate dehydrogenase (quinone) (346 aa).

FMN-binding positions include 62 to 66 and T86; that span reads AGMDK. Position 66 (K66) interacts with substrate. Substrate is bound at residue 111 to 115; that stretch reads NRMGF. FMN contacts are provided by N142 and N175. A substrate-binding site is contributed by N175. Catalysis depends on S178, which acts as the Nucleophile. N180 contributes to the substrate binding site. FMN-binding residues include K211 and V239. 240 to 241 provides a ligand contact to substrate; it reads NT. Residues G261, G289, and 310–311 each bind FMN; that span reads YT.

Belongs to the dihydroorotate dehydrogenase family. Type 2 subfamily. In terms of assembly, monomer. It depends on FMN as a cofactor.

Its subcellular location is the cell membrane. It catalyses the reaction (S)-dihydroorotate + a quinone = orotate + a quinol. Its pathway is pyrimidine metabolism; UMP biosynthesis via de novo pathway; orotate from (S)-dihydroorotate (quinone route): step 1/1. Catalyzes the conversion of dihydroorotate to orotate with quinone as electron acceptor. The polypeptide is Dihydroorotate dehydrogenase (quinone) (Thermus thermophilus (strain ATCC 27634 / DSM 579 / HB8)).